The sequence spans 591 residues: Reduced folate transporter (591 aa).

An N-acetylmethionine modification is found at Met-1. Residues 1–29 (MVPSSPAVEKQVPVEPGPDPELRSWRHLV) are Cytoplasmic-facing. Position 5 is a phosphoserine (Ser-5). Residues 30–50 (CYLCFYGFMAQIRPGESFITP) traverse the membrane as a helical segment. The folate site is built by Ile-48 and Thr-49. Over 51-64 (YLLGPDKNFTREQV) the chain is Extracellular. N-linked (GlcNAc...) asparagine glycosylation is present at Asn-58. Residues 65–87 (TNEITPVLSYSYLAVLVPVFLLT) form a helical membrane-spanning segment. Over 88–91 (DYLR) the chain is Cytoplasmic. Residues 92-112 (YTPVLLLQGLSFVSVWLLLLL) traverse the membrane as a helical segment. Topologically, residues 113–116 (GHSV) are extracellular. Residues 117 to 139 (AHMQLMELFYSVTMAARIAYSSY) form a helical membrane-spanning segment. Folate is bound by residues Glu-123 and Arg-133. The 2',3'-cGAMP site is built by Arg-133, Ile-134, Ser-137, Tyr-149, and Arg-157. Topologically, residues 140–153 (IFSLVRPARYQRVA) are cytoplasmic. Residues 154-178 (GYSRAAVLLGVFTSSVLGQLLVTVG) traverse the membrane as a helical segment. Val-164 is a binding site for folate. The Extracellular segment spans residues 179 to 183 (RVSFS). A helical membrane pass occupies residues 184–202 (TLNYISLAFLTFSVVLALF). At 203–266 (LKRPKRSLFF…ELGDSLRRPQ (64 aa)) the chain is on the cytoplasmic side. The residue at position 225 (Ser-225) is a Phosphoserine. A helical membrane pass occupies residues 267–292 (LRLWSLWWVFNSAGYYLVVYYVHILW). Tyr-281, Tyr-282, and Tyr-286 together coordinate folate. 2',3'-cGAMP is bound at residue Tyr-282. Topologically, residues 293-304 (NEVDPTTNSARV) are extracellular. Residues 305 to 327 (YNGAADAASTLLGAITSFAAGFV) traverse the membrane as a helical segment. Ser-321 contributes to the 2',3'-cGAMP binding site. Over 328–333 (KIRWAR) the chain is Cytoplasmic. The chain crosses the membrane as a helical span at residues 334-354 (WSKLLIAGVTATQAGLVFLLA). The Extracellular portion of the chain corresponds to 355–360 (HTRHPS). The chain crosses the membrane as a helical span at residues 361-384 (SIWLCYAAFVLFRGSYQFLVPIAT). Arg-373 and Gln-377 together coordinate folate. Residues Gln-377, Pro-381, Thr-384, Lys-393, Cys-396, and Phe-400 each coordinate 2',3'-cGAMP. Over 385–398 (FQIASSLSKELCAL) the chain is Cytoplasmic. A helical membrane pass occupies residues 399-422 (VFGVNTFFATIVKTIITFIVSDVR). The segment at 407 to 419 (ATIVKTIITFIVS) is required for substrate-binding. Residues 423-430 (GLGLPVRK) lie on the Extracellular side of the membrane. The helical transmembrane segment at 431 to 455 (QFQLYSVYFLILSIIYFLGAMLDGL) threads the bilayer. Residues 456–591 (RHCQRGHHPR…PSDGVQNVNQ (136 aa)) are Cytoplasmic-facing. Residues Ser-474, Ser-485, Ser-499, and Ser-503 each carry the phosphoserine modification.

Belongs to the reduced folate carrier (RFC) transporter (TC 2.A.48) family. In terms of tissue distribution, placenta, liver, and to a much smaller extent, in lung.

Its subcellular location is the cell membrane. The protein localises to the apical cell membrane. The protein resides in the basolateral cell membrane. The catalysed reaction is 5-amino-1-(5-phospho-beta-D-ribosyl)imidazole-4-carboxamide(in) + (6S)-5-methyl-5,6,7,8-tetrahydrofolate(out) = 5-amino-1-(5-phospho-beta-D-ribosyl)imidazole-4-carboxamide(out) + (6S)-5-methyl-5,6,7,8-tetrahydrofolate(in). The enzyme catalyses 2',3'-cGAMP(out) + 5-amino-1-(5-phospho-beta-D-ribosyl)imidazole-4-carboxamide(in) = 2',3'-cGAMP(in) + 5-amino-1-(5-phospho-beta-D-ribosyl)imidazole-4-carboxamide(out). It catalyses the reaction 3',3'-cGAMP(out) + 5-amino-1-(5-phospho-beta-D-ribosyl)imidazole-4-carboxamide(in) = 3',3'-cGAMP(in) + 5-amino-1-(5-phospho-beta-D-ribosyl)imidazole-4-carboxamide(out). Its function is as follows. Antiporter that mediates the import of reduced folates or a subset of cyclic dinucleotides, driven by the export of organic anions. Acts as an importer of immunoreactive cyclic dinucleotides, such as cyclic GMP-AMP (2'-3'-cGAMP), an immune messenger produced in response to DNA virus in the cytosol, and its linkage isomer 3'-3'-cGAMP, thus playing a role in triggering larger immune responses. Mechanistically, acts as a secondary active transporter, which exports intracellular organic anions down their concentration gradients to facilitate the uptake of its substrates. Has high affinity for N5-methyltetrahydrofolate, the predominant circulating form of folate. Also mediates the import of antifolate drug methotrexate. 5-amino-4-imidazolecarboxamide riboside (AICAR), when phosphorylated to AICAR monophosphate, can serve as an organic anion for antiporter activity. The chain is Reduced folate transporter from Homo sapiens (Human).